A 193-amino-acid polypeptide reads, in one-letter code: Xanthine phosphoribosyltransferase (193 aa).

The xanthine site is built by Leu20 and Asn27. 127–131 (AYGNA) lines the 5-phospho-alpha-D-ribose 1-diphosphate pocket. Residue Lys155 participates in xanthine binding.

It belongs to the purine/pyrimidine phosphoribosyltransferase family. Xpt subfamily. Homodimer.

The protein localises to the cytoplasm. It catalyses the reaction XMP + diphosphate = xanthine + 5-phospho-alpha-D-ribose 1-diphosphate. It functions in the pathway purine metabolism; XMP biosynthesis via salvage pathway; XMP from xanthine: step 1/1. Functionally, converts the preformed base xanthine, a product of nucleic acid breakdown, to xanthosine 5'-monophosphate (XMP), so it can be reused for RNA or DNA synthesis. The polypeptide is Xanthine phosphoribosyltransferase (Porphyromonas gingivalis (strain ATCC BAA-308 / W83)).